The sequence spans 263 residues: Putative hydro-lyase BPUM_0381 (263 aa).

It belongs to the D-glutamate cyclase family.

This chain is Putative hydro-lyase BPUM_0381, found in Bacillus pumilus (strain SAFR-032).